We begin with the raw amino-acid sequence, 94 residues long: Integration host factor subunit beta (94 aa).

The protein belongs to the bacterial histone-like protein family. As to quaternary structure, heterodimer of an alpha and a beta chain.

This protein is one of the two subunits of integration host factor, a specific DNA-binding protein that functions in genetic recombination as well as in transcriptional and translational control. The chain is Integration host factor subunit beta from Pseudomonas paraeruginosa (strain DSM 24068 / PA7) (Pseudomonas aeruginosa (strain PA7)).